Here is a 729-residue protein sequence, read N- to C-terminus: Catalase-peroxidase 1 (729 aa).

The tryptophyl-tyrosyl-methioninium (Trp-Tyr) (with M-252) cross-link spans 98 to 226 (WHSAGSYRIA…LAAVMMGLIY (129 aa)). His99 functions as the Proton acceptor in the catalytic mechanism. Residues 226 to 252 (YVNPEGVDGNPDPLRTAKDIRETFARM) constitute a cross-link (tryptophyl-tyrosyl-methioninium (Tyr-Met) (with W-98)). Position 267 (His267) interacts with heme b.

It belongs to the peroxidase family. Peroxidase/catalase subfamily. As to quaternary structure, homodimer or homotetramer. It depends on heme b as a cofactor. Post-translationally, formation of the three residue Trp-Tyr-Met cross-link is important for the catalase, but not the peroxidase activity of the enzyme.

It catalyses the reaction H2O2 + AH2 = A + 2 H2O. The enzyme catalyses 2 H2O2 = O2 + 2 H2O. Bifunctional enzyme with both catalase and broad-spectrum peroxidase activity. This is Catalase-peroxidase 1 from Cellvibrio japonicus (strain Ueda107) (Pseudomonas fluorescens subsp. cellulosa).